The primary structure comprises 2961 residues: Zinc finger ZZ-type and EF-hand domain-containing protein 1 (2961 aa).

The tract at residues Met-1–Ala-41 is disordered. A lipid anchor (N-myristoyl glycine) is attached at Gly-2. Positions Cys-111–Ala-146 constitute an EF-hand domain. One can recognise a DOC domain in the interval Leu-226–Ser-405. Phosphoserine occurs at positions 240, 1475, 1488, and 1509. Positions Thr-1446 to Gly-1531 are disordered. Residues Gly-1485–Gly-1502 are compositionally biased toward polar residues. Thr-1512 bears the Phosphothreonine mark. Residues Pro-1516–Gly-1531 show a composition bias toward low complexity. Position 1518 is a phosphoserine (Ser-1518). Thr-1521 and Thr-1523 each carry phosphothreonine. Phosphoserine occurs at positions 1537 and 1540. ZZ-type zinc fingers lie at residues Asn-1778 to Asp-1833 and Asn-1827 to Ile-1882. Cys-1783, Cys-1786, Cys-1797, Cys-1800, Cys-1806, Cys-1809, His-1819, His-1823, Cys-1832, Cys-1835, Cys-1846, Cys-1849, Cys-1855, Cys-1858, His-1868, and His-1872 together coordinate Zn(2+). 2 disordered regions span residues Ala-1994 to Glu-2078 and Leu-2426 to Pro-2455. Positions Ala-2009–Lys-2027 are enriched in basic and acidic residues. A compositionally biased stretch (polar residues) spans Lys-2033 to Asp-2043. The span at Leu-2426–Arg-2440 shows a compositional bias: basic and acidic residues. The residue at position 2444 (Ser-2444) is a Phosphoserine. An N6-acetyllysine modification is found at Lys-2667.

Interacts with KLF6 and KLF9. Interacts via (ZZ-type 2 zinc finger) with histone H3 trimethylated at 'Lys-4' (H3K4me3) and histone H3 acetylated at 'Lys-4' (H3K4ac). As to expression, expressed at low levels in cerebellum.

Its function is as follows. Histone H3 reader which may act as a transcriptional coactivator for KLF6 and KLF9 transcription factors. This Homo sapiens (Human) protein is Zinc finger ZZ-type and EF-hand domain-containing protein 1.